The primary structure comprises 150 residues: 3-dehydroquinate dehydratase (150 aa).

Tyr22 serves as the catalytic Proton acceptor. Substrate contacts are provided by Asn73, His79, and Asp86. His99 serves as the catalytic Proton donor. Residues 100-101 (LT) and Arg110 each bind substrate.

It belongs to the type-II 3-dehydroquinase family. In terms of assembly, homododecamer.

The catalysed reaction is 3-dehydroquinate = 3-dehydroshikimate + H2O. It participates in metabolic intermediate biosynthesis; chorismate biosynthesis; chorismate from D-erythrose 4-phosphate and phosphoenolpyruvate: step 3/7. In terms of biological role, catalyzes a trans-dehydration via an enolate intermediate. This Desulforudis audaxviator (strain MP104C) protein is 3-dehydroquinate dehydratase.